The primary structure comprises 359 residues: Mitochondrial glutathione transporter SLC25A39 (359 aa).

At 1–14 (MADQDPAGISPLQQ) the chain is on the mitochondrial intermembrane side. Solcar repeat units lie at residues 9 to 151 (ISPL…LKAF), 159 to 243 (SDLY…VKSW), and 253 to 347 (TSVG…GKSF). Residues 15–35 (MVASGTGAVVTSLFMTPLDVV) traverse the membrane as a helical segment. The Mitochondrial matrix segment spans residues 36–121 (KVRLQSQRPS…VKIVRHEGTR (86 aa)). Residues Cys74, Cys78, Cys88, and Cys94 each coordinate [2Fe-2S] cluster. The chain crosses the membrane as a helical span at residues 122–142 (TLWSGLPATLVMTVPATAIYF). Topologically, residues 143–160 (TAYDQLKAFLCGRALTSD) are mitochondrial intermembrane. Residues 161–181 (LYAPMVAGALARLGTVTVISP) traverse the membrane as a helical segment. Topologically, residues 182-214 (LELMRTKLQAQHVSYRELGACVRTAVAQGGWRS) are mitochondrial matrix. A helical membrane pass occupies residues 215-235 (LWLGWGPTALRDVPFSALYWF). The Mitochondrial intermembrane portion of the chain corresponds to 236 to 258 (NYELVKSWLNGFRPKDQTSVGMS). Residues 259 to 279 (FVAGGISGTVAAVLTLPFDVV) form a helical membrane-spanning segment. Residues 280 to 317 (KTQRQVALGAMEAVRVNPLHVDSTWLLLRRIRAESGTK) are Mitochondrial matrix-facing. A helical transmembrane segment spans residues 318–338 (GLFAGFLPRIIKAAPSCAIMI). Topologically, residues 339-359 (STYEFGKSFFQRLNQDRLLGG) are mitochondrial intermembrane.

This sequence belongs to the mitochondrial carrier (TC 2.A.29) family. In terms of processing, cleaved and degraded by AFG3L2; degradation by AFG3L2 is regulated by the ability of SLC25A39 to bind iron-sulfur. In absence of mitochondrial glutathione, SLC25A39 binds iron-sulfur, preventing cleavage and degradation by AFG3L2. The presence of mitochondrial glutathione prevents iron-sulfur-binding to SLC25A39, promoting cleavage and degradation by AFG3L2. In terms of tissue distribution, expressed in many tissues. Abundant in testis and kidney.

Its subcellular location is the mitochondrion inner membrane. It carries out the reaction glutathione(in) = glutathione(out). Its activity is regulated as follows. The activity of SLC25A39 is regulated by levels of mitochondrial glutathione via its ability to bind [2Fe-2S] iron-sulfur cluster. Upon physiological levels of mitochondrial glutathione, glutathione prevents iron-sulfur-binding to SLC25A39 promoting cleavage and degradation by AFG3L2. Upon depletion of mitochondrial glutathione, SLC25A39 binds iron-sulfur, preventing cleavage and degradation by AFG3L2. Functionally, mitochondrial transporter required for glutathione import into mitochondria. Glutathione, which plays key roles in oxidative metabolism, is produced exclusively in the cytosol and is imported in many organelles. Mitochondrial glutathione is required for the activity and stability of proteins containing iron-sulfur clusters, as well as erythropoiesis. This is Mitochondrial glutathione transporter SLC25A39 from Homo sapiens (Human).